The primary structure comprises 217 residues: Glycerol-3-phosphate acyltransferase (217 aa).

Transmembrane regions (helical) follow at residues 1 to 21 (MAWAISGLLVILGYLLGSIPT), 54 to 74 (TAAIAVLIIDMLKAMVAVGGV), 84 to 104 (AIVPLDWKPWLIVTVASAAIL), 126 to 146 (VLLVLNPLVALGALASFLFML), and 165 to 185 (LLMLVLHQPLAYILFAILAGI).

It belongs to the PlsY family. In terms of assembly, probably interacts with PlsX.

The protein localises to the cell inner membrane. It carries out the reaction an acyl phosphate + sn-glycerol 3-phosphate = a 1-acyl-sn-glycero-3-phosphate + phosphate. Its pathway is lipid metabolism; phospholipid metabolism. Its function is as follows. Catalyzes the transfer of an acyl group from acyl-phosphate (acyl-PO(4)) to glycerol-3-phosphate (G3P) to form lysophosphatidic acid (LPA). This enzyme utilizes acyl-phosphate as fatty acyl donor, but not acyl-CoA or acyl-ACP. This chain is Glycerol-3-phosphate acyltransferase, found in Rippkaea orientalis (strain PCC 8801 / RF-1) (Cyanothece sp. (strain PCC 8801)).